The chain runs to 282 residues: MSPKKSPFFELRSGSVDTLLFVVKTTDLEAMRAELTRRFEATPEFFANDVVAIDVRRLAGNERVALADIAQLLDSVRMRPVGVVADAQQAWAAESALPLLEARDRRGAAARSADEESANAAAAAPAATAATATPPADLFESVAGTPESGTPATAAAVEPAPAAEPVRLATSSQTMVVDKPLRSGQRIYAKGDLVVLGLVSYGAEVIAEGNIHIYAPLRGRALAGVQGNHDARIFCTCLEPELISIAGIYRTTENPLPADVLGKPVQIWLEEEKLMIEPLRLT.

The tract at residues 108–127 is disordered; sequence AAARSADEESANAAAAAPAA. Low complexity predominate over residues 118–127; that stretch reads ANAAAAAPAA.

This sequence belongs to the MinC family. Interacts with MinD and FtsZ.

Cell division inhibitor that blocks the formation of polar Z ring septums. Rapidly oscillates between the poles of the cell to destabilize FtsZ filaments that have formed before they mature into polar Z rings. Prevents FtsZ polymerization. This Paraburkholderia xenovorans (strain LB400) protein is Probable septum site-determining protein MinC.